We begin with the raw amino-acid sequence, 203 residues long: Dephospho-CoA kinase (203 aa).

Residues 6 to 203 form the DPCK domain; the sequence is KVAITGGLSC…ELYQELKIYI (198 aa). 14–19 contacts ATP; the sequence is SCGKSS.

Belongs to the CoaE family.

The protein localises to the cytoplasm. The enzyme catalyses 3'-dephospho-CoA + ATP = ADP + CoA + H(+). Its pathway is cofactor biosynthesis; coenzyme A biosynthesis; CoA from (R)-pantothenate: step 5/5. Its function is as follows. Catalyzes the phosphorylation of the 3'-hydroxyl group of dephosphocoenzyme A to form coenzyme A. This Protochlamydia amoebophila (strain UWE25) protein is Dephospho-CoA kinase.